Here is a 655-residue protein sequence, read N- to C-terminus: Probable inactive receptor kinase At1g48480 (655 aa).

The N-terminal stretch at 1–32 is a signal peptide; sequence MRVFFFPNSSMAILSVFLSLLLLSLPLPSTQD. LRR repeat units lie at residues 71–95, 98–120, 122–144, 146–169, 170–192, and 194–215; these read SNRVTALRLPGVALSGDIPEGIFGN, QLRTLSLRLNALSGSLPKDLSTS, NLRHLYLQGNRFSGEIPEVLFSL, HLVRLNLASNSFTGEISSGFTNLT, KLKTLFLENNQLSGSIPDLDLPL, and QFNVSNNSLNGSIPKNLQRFES. The segment at 234–260 is disordered; sequence EETVPSQPTSGGNRTPPSVEGSEEKKK. Polar residues predominate over residues 237–249; it reads VPSQPTSGGNRTP. The helical transmembrane segment at 269 to 289 threads the bilayer; sequence IAGIVIGCVVGFALIVLILMV. The 276-residue stretch at 371–646 folds into the Protein kinase domain; sequence RASAEVLGKG…RKMENLRPYS (276 aa). S373 carries the post-translational modification Phosphoserine. ATP is bound at residue 377 to 385; the sequence is LGKGTFGTA. A Phosphothreonine modification is found at T394. K399 lines the ATP pocket. Position 450 is a phosphoserine (S450). The residue at position 526 (T526) is a Phosphothreonine. Residue S546 is modified to Phosphoserine. T622 is modified (phosphothreonine).

The protein belongs to the protein kinase superfamily. In terms of tissue distribution, highly expressed in seedlings and leaves. Lower expression in roots, stems, flowers and siliques. Detected in the vascular tissues of roots, in the trichomes of young rosettes leaves and hydathodes, in the floral abscission zones, in filament apex and stomata cells of anthers, in inflorescence stems and in sepals.

It localises to the cell membrane. This Arabidopsis thaliana (Mouse-ear cress) protein is Probable inactive receptor kinase At1g48480 (RKL1).